The chain runs to 333 residues: 4-hydroxyproline epimerase (333 aa).

Cysteine 90 functions as the Proton acceptor in the catalytic mechanism. Residues 91-92 (GH) and aspartate 249 contribute to the substrate site. Cysteine 253 acts as the Proton donor in catalysis. Position 254-255 (254-255 (GT)) interacts with substrate.

The protein belongs to the proline racemase family. As to quaternary structure, homodimer.

It catalyses the reaction trans-4-hydroxy-L-proline = cis-4-hydroxy-D-proline. Inhibited by iodoacetate, iodoacetamide and by high amounts (10 mM) of pyrrole-2-carboxylic acid (PYC). Not inhibited by PYC at 1 mM. Functionally, allows intracellular utilization of 4-hydroxyproline, one of the major constituents of host collagen, by converting 4-hydroxy-L-proline to 4-hydroxy-D-proline, which can be further metabolized by intracellular 4-hydroxy-D-proline oxidases. Strong B-cell mitogen. Plays an important role in the regulation of intra- and extracellular amino acid pools, allowing the bacterium to profit from host precursors and enzymatic pathways. This is 4-hydroxyproline epimerase from Brucella melitensis biotype 1 (strain ATCC 23456 / CCUG 17765 / NCTC 10094 / 16M).